A 258-amino-acid chain; its full sequence is Acyl-[acyl-carrier-protein]--UDP-N-acetylglucosamine O-acyltransferase (258 aa).

This sequence belongs to the transferase hexapeptide repeat family. LpxA subfamily. As to quaternary structure, homotrimer.

The protein resides in the cytoplasm. It carries out the reaction a (3R)-hydroxyacyl-[ACP] + UDP-N-acetyl-alpha-D-glucosamine = a UDP-3-O-[(3R)-3-hydroxyacyl]-N-acetyl-alpha-D-glucosamine + holo-[ACP]. It participates in glycolipid biosynthesis; lipid IV(A) biosynthesis; lipid IV(A) from (3R)-3-hydroxytetradecanoyl-[acyl-carrier-protein] and UDP-N-acetyl-alpha-D-glucosamine: step 1/6. Its function is as follows. Involved in the biosynthesis of lipid A, a phosphorylated glycolipid that anchors the lipopolysaccharide to the outer membrane of the cell. In Pseudomonas fluorescens (strain Pf0-1), this protein is Acyl-[acyl-carrier-protein]--UDP-N-acetylglucosamine O-acyltransferase.